Reading from the N-terminus, the 778-residue chain is Preasperterpenoid A synthase PvPS (778 aa).

A terpene cyclase region spans residues 1–414; sequence MAATKKSTAT…HRYNFHKPAA (414 aa). Mg(2+)-binding residues include Asp176 and Asp180. Asp176 is a binding site for substrate. Positions 176 to 180 match the DDXXD 1 motif; it reads DDILD. Substrate contacts are provided by residues 266–269, Asn310, 314–318, and 406–407; these read RVIN, SWEKE, and RY. The short motif at 310–318 is the NSE/DTE element; sequence NDYFSWEKE. The span at 414-431 shows a compositional bias: basic and acidic residues; the sequence is AKENEDTDDEGAKSDDSK. The interval 415-778 is prenyltransferase; the sequence is KENEDTDDEG…LRLLLKRLQV (364 aa). A disordered region spans residues 416–454; that stretch reads ENEDTDDEGAKSDDSKTTLNDSTDSTVVDVKTPATSGLL. 3 residues coordinate isopentenyl diphosphate: Lys499, Arg502, and His531. Mg(2+)-binding residues include Asp538 and Asp542. The short motif at 538 to 542 is the DDXXD 2 element; it reads DDIED. Dimethylallyl diphosphate is bound at residue Arg547. Isopentenyl diphosphate is bound at residue Arg548. Dimethylallyl diphosphate-binding residues include Lys625, Thr626, Gln662, Asn669, Lys679, and Lys689.

The protein in the N-terminal section; belongs to the terpene synthase family. In the C-terminal section; belongs to the FPP/GGPP synthase family. As to quaternary structure, hexamer. It depends on Mg(2+) as a cofactor.

It catalyses the reaction isopentenyl diphosphate + (2E,6E)-farnesyl diphosphate = (2E,6E,10E)-geranylgeranyl diphosphate + diphosphate. It carries out the reaction isopentenyl diphosphate + (2E,6E,10E)-geranylgeranyl diphosphate = (2E,6E,10E,14E)-geranylfarnesyl diphosphate + diphosphate. The catalysed reaction is (2E,6E,10E,14E)-geranylfarnesyl diphosphate = preasperterpenoid A + diphosphate. It functions in the pathway secondary metabolite biosynthesis; terpenoid biosynthesis. Its function is as follows. Bifunctional sesterterpene synthase that possesses both prenyl transferase and terpene cyclase activity, converting isopentenyl diphosphate and dimethylallyl diphosphate into geranylfarnesyl diphosphate (GFPP) and further converting GFPP into preasperterpenoid A. The protein is Preasperterpenoid A synthase PvPS of Talaromyces verruculosus (Penicillium verruculosum).